Here is a 333-residue protein sequence, read N- to C-terminus: Phosphate acetyltransferase (333 aa).

Belongs to the phosphate acetyltransferase and butyryltransferase family.

The protein localises to the cytoplasm. The catalysed reaction is acetyl-CoA + phosphate = acetyl phosphate + CoA. It participates in metabolic intermediate biosynthesis; acetyl-CoA biosynthesis; acetyl-CoA from acetate: step 2/2. This Clostridium acetobutylicum (strain ATCC 824 / DSM 792 / JCM 1419 / IAM 19013 / LMG 5710 / NBRC 13948 / NRRL B-527 / VKM B-1787 / 2291 / W) protein is Phosphate acetyltransferase (pta).